A 290-amino-acid chain; its full sequence is Nucleotide-binding protein Aave_3603 (290 aa).

13 to 20 contributes to the ATP binding site; sequence GMSGSGKS. A GTP-binding site is contributed by 62–65; that stretch reads DVRS.

It belongs to the RapZ-like family.

Its function is as follows. Displays ATPase and GTPase activities. This Paracidovorax citrulli (strain AAC00-1) (Acidovorax citrulli) protein is Nucleotide-binding protein Aave_3603.